The following is a 211-amino-acid chain: tRNA (guanine-N(7)-)-methyltransferase (211 aa).

S-adenosyl-L-methionine is bound by residues Glu43, Asp68, and Asn117. Substrate is bound by residues Lys121, Asp153, and 190 to 193 (TEYE).

The protein belongs to the class I-like SAM-binding methyltransferase superfamily. TrmB family.

It catalyses the reaction guanosine(46) in tRNA + S-adenosyl-L-methionine = N(7)-methylguanosine(46) in tRNA + S-adenosyl-L-homocysteine. The protein operates within tRNA modification; N(7)-methylguanine-tRNA biosynthesis. In terms of biological role, catalyzes the formation of N(7)-methylguanine at position 46 (m7G46) in tRNA. The chain is tRNA (guanine-N(7)-)-methyltransferase from Clostridium acetobutylicum (strain ATCC 824 / DSM 792 / JCM 1419 / IAM 19013 / LMG 5710 / NBRC 13948 / NRRL B-527 / VKM B-1787 / 2291 / W).